Reading from the N-terminus, the 114-residue chain is Small ribosomal subunit protein bS6 (114 aa).

This sequence belongs to the bacterial ribosomal protein bS6 family.

Functionally, binds together with bS18 to 16S ribosomal RNA. In Bacteroides fragilis (strain YCH46), this protein is Small ribosomal subunit protein bS6.